The following is a 93-amino-acid chain: UPF0358 protein BBR47_22520 (93 aa).

This sequence belongs to the UPF0358 family.

This is UPF0358 protein BBR47_22520 from Brevibacillus brevis (strain 47 / JCM 6285 / NBRC 100599).